The following is a 130-amino-acid chain: Translation initiation factor 5A (130 aa).

Position 36 is a hypusine (Lys36).

The protein belongs to the eIF-5A family.

Its subcellular location is the cytoplasm. Its function is as follows. Functions by promoting the formation of the first peptide bond. This is Translation initiation factor 5A (eif5a) from Methanothermobacter thermautotrophicus (strain ATCC 29096 / DSM 1053 / JCM 10044 / NBRC 100330 / Delta H) (Methanobacterium thermoautotrophicum).